Consider the following 354-residue polypeptide: Putative ankyrin repeat protein L284 (354 aa).

3 ANK repeats span residues 201–230, 253–284, and 286–314; these read ILDD…LSND, SRYP…NPIV, and LHKA…DIDI.

This is Putative ankyrin repeat protein L284 from Acanthamoeba polyphaga (Amoeba).